The primary structure comprises 65 residues: Large ribosomal subunit protein bL35 (65 aa).

A disordered region spans residues 1-25 (MPKMKSHRGAAKRFKKTGTGKLKRA).

It belongs to the bacterial ribosomal protein bL35 family.

This Clostridium botulinum (strain Eklund 17B / Type B) protein is Large ribosomal subunit protein bL35.